A 227-amino-acid polypeptide reads, in one-letter code: MQLCVALDLEKKEDNLSLLQELKGLDLWAKVGLRSFIRDGAVFLDEIRKIDENFKIFLDLKLYDIPYTMANAALECAKLDIDMLTVHLSSAKSALTALMQRLNALKKRPLIMGVSALTSFSEEEFLMVYNAPLKTQAIKLSAMGKESGIDGVVCSVFESLAIKEALGKDFLTLTPGIRLDQNDKEDQERVANAKEAKQNLSDFIVVGRPIYQAKEPREVVLELLKDC.

Substrate-binding positions include D8, K30, D59–T68, T118, R178, Q187, G207, and R208. Catalysis depends on K61, which acts as the Proton donor.

It belongs to the OMP decarboxylase family. Type 1 subfamily. In terms of assembly, homodimer.

It catalyses the reaction orotidine 5'-phosphate + H(+) = UMP + CO2. It functions in the pathway pyrimidine metabolism; UMP biosynthesis via de novo pathway; UMP from orotate: step 2/2. Functionally, catalyzes the decarboxylation of orotidine 5'-monophosphate (OMP) to uridine 5'-monophosphate (UMP). The protein is Orotidine 5'-phosphate decarboxylase of Helicobacter pylori (strain ATCC 700392 / 26695) (Campylobacter pylori).